Here is a 374-residue protein sequence, read N- to C-terminus: DNA replication and repair protein RecF (374 aa).

Position 34–41 (34–41) interacts with ATP; the sequence is GNNGAGKT.

The protein belongs to the RecF family.

Its subcellular location is the cytoplasm. The RecF protein is involved in DNA metabolism; it is required for DNA replication and normal SOS inducibility. RecF binds preferentially to single-stranded, linear DNA. It also seems to bind ATP. In Rhizobium etli (strain CIAT 652), this protein is DNA replication and repair protein RecF.